The chain runs to 86 residues: RNA-binding protein Hfq (86 aa).

One can recognise a Sm domain in the interval 9 to 68 (DPYLNTLRKEKVGVSIYLVNGIKLQGTIESFDQFVILLKNTVSQMVYKHAISTVVPVRPI).

Belongs to the Hfq family. As to quaternary structure, homohexamer.

Its function is as follows. RNA chaperone that binds small regulatory RNA (sRNAs) and mRNAs to facilitate mRNA translational regulation in response to envelope stress, environmental stress and changes in metabolite concentrations. Also binds with high specificity to tRNAs. The polypeptide is RNA-binding protein Hfq (Pseudomonas fluorescens (strain ATCC BAA-477 / NRRL B-23932 / Pf-5)).